We begin with the raw amino-acid sequence, 351 residues long: Phospho-N-acetylmuramoyl-pentapeptide-transferase (351 aa).

The next 10 membrane-spanning stretches (helical) occupy residues 22-42, 65-85, 87-107, 128-148, 158-178, 190-210, 225-245, 254-274, 279-299, and 328-348; these read ILAF…FISW, TPTM…LITT, FNKY…LGFI, FLLQ…VGFD, YPIF…IVAM, GLAT…LYIV, LGVG…LGFL, VFMG…LAIV, LLLI…ILQV, and KITI…ILSI.

Belongs to the glycosyltransferase 4 family. MraY subfamily. Mg(2+) serves as cofactor.

Its subcellular location is the cell inner membrane. It catalyses the reaction UDP-N-acetyl-alpha-D-muramoyl-L-alanyl-gamma-D-glutamyl-meso-2,6-diaminopimeloyl-D-alanyl-D-alanine + di-trans,octa-cis-undecaprenyl phosphate = di-trans,octa-cis-undecaprenyl diphospho-N-acetyl-alpha-D-muramoyl-L-alanyl-D-glutamyl-meso-2,6-diaminopimeloyl-D-alanyl-D-alanine + UMP. It participates in cell wall biogenesis; peptidoglycan biosynthesis. Its function is as follows. Catalyzes the initial step of the lipid cycle reactions in the biosynthesis of the cell wall peptidoglycan: transfers peptidoglycan precursor phospho-MurNAc-pentapeptide from UDP-MurNAc-pentapeptide onto the lipid carrier undecaprenyl phosphate, yielding undecaprenyl-pyrophosphoryl-MurNAc-pentapeptide, known as lipid I. The polypeptide is Phospho-N-acetylmuramoyl-pentapeptide-transferase (Nautilia profundicola (strain ATCC BAA-1463 / DSM 18972 / AmH)).